The sequence spans 313 residues: Guanine nucleotide-binding protein-like 3-like protein (313 aa).

The segment covering 1–14 (MGIKKKRQSKRLTT) has biased composition (basic residues). Positions 1 to 41 (MGIKKKRQSKRLTTRKREGMLKRARANERKKRRMDRKMQAK) are disordered. Over residues 15–27 (RKREGMLKRARAN) the composition is skewed to basic and acidic residues. Residues 95–98 (SKSD), 178–185 (GNPGSGKN), and 212–215 (TLSS) contribute to the GTP site.

Belongs to the MMR1/HSR1 GTP-binding protein family.

The protein resides in the nucleus. Its subcellular location is the nucleolus. Functionally, required for normal processing of ribosomal pre-rRNA. Required for cell proliferation. Binds GTP. The sequence is that of Guanine nucleotide-binding protein-like 3-like protein from Encephalitozoon cuniculi (strain GB-M1) (Microsporidian parasite).